Reading from the N-terminus, the 174-residue chain is Thiol-disulfide oxidoreductase ResA (174 aa).

The chain crosses the membrane as a helical; Signal-anchor for type II membrane protein span at residues Thr-11–Phe-30. Residues Val-36–Pro-174 enclose the Thioredoxin domain. A disulfide bridge links Cys-74 with Cys-77.

Belongs to the thioredoxin family. ResA subfamily.

The protein localises to the cell membrane. Its pathway is protein modification; cytochrome c assembly. Thiol-disulfide oxidoreductase which is required in disulfide reduction during c-type cytochrome synthesis. May accept reducing equivalents from CcdA, leading to breakage of disulfide bonds in apocytochrome c; following this reduction heme can be covalently attached. This is Thiol-disulfide oxidoreductase ResA from Geobacillus thermodenitrificans (strain NG80-2).